The following is a 251-amino-acid chain: Elongator complex protein 6 (251 aa).

Belongs to the ELP6 family. As to quaternary structure, component of the elongator complex composed of Elp1, Elp2, Elp3, Elp4, Elp5 and Elp6. The elongator complex associates with and stabilizes microtubules; efficient interaction requires the full complex. Interacts with InR/Insulin-like receptor; the interaction may stabilize Elp6.

Its subcellular location is the cytoplasm. The protein localises to the nucleus. The protein resides in the cytoskeleton. It is found in the spindle. The protein operates within tRNA modification; 5-methoxycarbonylmethyl-2-thiouridine-tRNA biosynthesis. In terms of biological role, component of the elongator complex, which is required for multiple tRNA modifications, including mcm5U (5-methoxycarbonylmethyl uridine), mcm5s2U (5-methoxycarbonylmethyl-2-thiouridine), and ncm5U (5-carbamoylmethyl uridine). The elongator complex catalyzes formation of carboxymethyluridine in the wobble base at position 34 in tRNAs. Binding by the elongator complex stabilizes microtubules and promotes their growth. This induces central spindle asymmetry, promoting polarized signaling endosome trafficking during asymmetric cell division and cell fate assignation of sensory organ precursor cells. Required in germ line cells for microtubule organization involved in oocyte polarization and chromosome organization. Involved in InR-TOR (insulin-like receptor-target of rapamycin) signaling regulation of cellular metabolism, autophagy and apoptosis. This is Elongator complex protein 6 from Drosophila melanogaster (Fruit fly).